Consider the following 321-residue polypeptide: Basic peroxidase (321 aa).

The N-terminal stretch at methionine 1–alanine 30 is a signal peptide. A Pyrrolidone carboxylic acid modification is found at glutamine 31. 4 disulfides stabilise this stretch: cysteine 41/cysteine 117, cysteine 74/cysteine 79, cysteine 123/cysteine 317, and cysteine 202/cysteine 228. Catalysis depends on histidine 72, which acts as the Proton acceptor. Residues aspartate 73, valine 76, glycine 78, aspartate 80, and serine 82 each coordinate Ca(2+). Proline 165 provides a ligand contact to substrate. Heme b is bound at residue histidine 195. Threonine 196 lines the Ca(2+) pocket. N-linked (GlcNAc...) asparagine glycosylation is found at asparagine 211 and asparagine 221. Ca(2+) is bound by residues aspartate 241, threonine 244, and aspartate 249.

This sequence belongs to the peroxidase family. Classical plant (class III) peroxidase subfamily. Heme b serves as cofactor. The cofactor is Ca(2+). Post-translationally, N-glycosylated. As to expression, expressed in tracheary elements, roots, young and old hypocotyls, and stems in the partially glycosylated form and in roots and young hypocotyls in the fully glycosylated form. None of the isoforms is significantly expressed in leaves or cotyledons.

It is found in the secreted. The catalysed reaction is 2 a phenolic donor + H2O2 = 2 a phenolic radical donor + 2 H2O. In terms of biological role, removal of H(2)O(2), oxidation of toxic reductants, biosynthesis and degradation of lignin, suberization, auxin catabolism, response to environmental stresses such as wounding, pathogen attack and oxidative stress. These functions might be dependent on each isozyme/isoform in each plant tissue. Involved in the synthesis of highly polymerized lignins. This is Basic peroxidase (POD1) from Zinnia elegans (Garden zinnia).